A 293-amino-acid polypeptide reads, in one-letter code: Nitrogenase iron protein (293 aa).

10 to 17 (GKGGIGKS) lines the ATP pocket. Cys98 is a [4Fe-4S] cluster binding site. The residue at position 101 (Arg101) is an ADP-ribosylarginine; by dinitrogenase reductase ADP-ribosyltransferase. Cys133 is a binding site for [4Fe-4S] cluster.

It belongs to the NifH/BchL/ChlL family. Homodimer. [4Fe-4S] cluster is required as a cofactor. In terms of processing, the reversible ADP-ribosylation of Arg-101 inactivates the nitrogenase reductase and regulates nitrogenase activity.

The enzyme catalyses N2 + 8 reduced [2Fe-2S]-[ferredoxin] + 16 ATP + 16 H2O = H2 + 8 oxidized [2Fe-2S]-[ferredoxin] + 2 NH4(+) + 16 ADP + 16 phosphate + 6 H(+). The key enzymatic reactions in nitrogen fixation are catalyzed by the nitrogenase complex, which has 2 components: the iron protein and the molybdenum-iron protein. The sequence is that of Nitrogenase iron protein from Stutzerimonas stutzeri (strain A1501) (Pseudomonas stutzeri).